A 272-amino-acid polypeptide reads, in one-letter code: ATP phosphoribosyltransferase regulatory subunit (272 aa).

Belongs to the class-II aminoacyl-tRNA synthetase family. HisZ subfamily. As to quaternary structure, heteromultimer composed of HisG and HisZ subunits.

The protein resides in the cytoplasm. It participates in amino-acid biosynthesis; L-histidine biosynthesis; L-histidine from 5-phospho-alpha-D-ribose 1-diphosphate: step 1/9. Functionally, required for the first step of histidine biosynthesis. May allow the feedback regulation of ATP phosphoribosyltransferase activity by histidine. This Staphylococcus aureus (strain Mu3 / ATCC 700698) protein is ATP phosphoribosyltransferase regulatory subunit.